The sequence spans 804 residues: Leucine--tRNA ligase (804 aa).

Residues 40–51 (PYPSGQGLHVGH) carry the 'HIGH' region motif. The short motif at 576–580 (KMSKS) is the 'KMSKS' region element. Residue K579 participates in ATP binding.

Belongs to the class-I aminoacyl-tRNA synthetase family.

It localises to the cytoplasm. The catalysed reaction is tRNA(Leu) + L-leucine + ATP = L-leucyl-tRNA(Leu) + AMP + diphosphate. This chain is Leucine--tRNA ligase, found in Oceanobacillus iheyensis (strain DSM 14371 / CIP 107618 / JCM 11309 / KCTC 3954 / HTE831).